A 331-amino-acid chain; its full sequence is Peroxisomal nicotinamide adenine dinucleotide carrier (331 aa).

Solcar repeat units follow at residues 2–91 (SDAL…FRNR), 109–216 (VGMF…MLTK), and 229–320 (VTAL…LVKG). Helical transmembrane passes span 5–25 (LING…TYPL), 63–85 (LYGG…YYFY), 116–136 (LVAA…WVIV), 180–200 (VYDE…LIMV), 235–255 (FLLG…LLVV), and 293–313 (YKGM…LFMI).

This sequence belongs to the mitochondrial carrier (TC 2.A.29) family. In terms of assembly, homodimer. In terms of tissue distribution, expressed in cotyledons, hypocotyls, vascular tissues, trichomes, hydathodes, seeds, pedicels, flowers and stigma.

The protein resides in the glyoxysome membrane. With respect to regulation, inhibited by pyridoxal 5'-phosphate, bathophenanthroline, tannic acid, mersalyl, mercuric chloride and bromocresol purple. Mediates the NAD(+) import into peroxisomes. Favors the NAD(+)(in)/AMP(out) antiport exchange, but is also able to catalyze a low unidirectional transport that might be essential under special conditions. Transports CoA, dephospho-CoA, acetyl-CoA, adenosine 3',5'-diphosphate (PAP), NAD(+), AMP, ADP and NADH, but has no activity with ATP, GTP, GDP, NADPH, NADP(+) or FAD. Required for peroxisomes proliferation. The polypeptide is Peroxisomal nicotinamide adenine dinucleotide carrier (PXN) (Arabidopsis thaliana (Mouse-ear cress)).